Here is a 587-residue protein sequence, read N- to C-terminus: D-lactate dehydrogenase [cytochrome] 1, mitochondrial (587 aa).

Residues 146-327 (SPEQRPRIIL…TEATVKCHVK (182 aa)) enclose the FAD-binding PCMH-type domain.

The protein belongs to the FAD-binding oxidoreductase/transferase type 4 family. The cofactor is FAD.

It is found in the mitochondrion inner membrane. The enzyme catalyses (R)-lactate + 2 Fe(III)-[cytochrome c] = 2 Fe(II)-[cytochrome c] + pyruvate + 2 H(+). Its function is as follows. Catalyzes the stereospecific oxidation of D-lactate to pyruvate. The sequence is that of D-lactate dehydrogenase [cytochrome] 1, mitochondrial from Saccharomyces cerevisiae (strain ATCC 204508 / S288c) (Baker's yeast).